We begin with the raw amino-acid sequence, 315 residues long: Methionyl-tRNA formyltransferase (315 aa).

Ser-113–Pro-116 provides a ligand contact to (6S)-5,6,7,8-tetrahydrofolate.

It belongs to the Fmt family.

The enzyme catalyses L-methionyl-tRNA(fMet) + (6R)-10-formyltetrahydrofolate = N-formyl-L-methionyl-tRNA(fMet) + (6S)-5,6,7,8-tetrahydrofolate + H(+). Its function is as follows. Attaches a formyl group to the free amino group of methionyl-tRNA(fMet). The formyl group appears to play a dual role in the initiator identity of N-formylmethionyl-tRNA by promoting its recognition by IF2 and preventing the misappropriation of this tRNA by the elongation apparatus. In Pseudoalteromonas atlantica (strain T6c / ATCC BAA-1087), this protein is Methionyl-tRNA formyltransferase.